We begin with the raw amino-acid sequence, 602 residues long: ATP-dependent RNA helicase DeaD (602 aa).

Positions 6 to 34 (MTFSSFGLNSCIITALNDIGYVQPSPIQA) match the Q motif motif. The region spanning 37–208 (IPYLIKGKDV…RRFMKNPKEI (172 aa)) is the Helicase ATP-binding domain. Position 50 to 57 (50 to 57 (AQTGSGKT)) interacts with ATP. The DEAD box motif lies at 156–159 (DEAD). The Helicase C-terminal domain occupies 231 to 378 (KTDALIRFLE…EVNLPKSDFL (148 aa)).

The protein belongs to the DEAD box helicase family. DeaD/CsdA subfamily.

Its subcellular location is the cytoplasm. The enzyme catalyses ATP + H2O = ADP + phosphate + H(+). In terms of biological role, DEAD-box RNA helicase involved in various cellular processes at low temperature, including ribosome biogenesis, mRNA degradation and translation initiation. This chain is ATP-dependent RNA helicase DeaD, found in Buchnera aphidicola subsp. Baizongia pistaciae (strain Bp).